The following is a 161-amino-acid chain: V-type proton ATPase 16 kDa proteolipid subunit c 2 (161 aa).

The Lumenal segment spans residues 1–15; sequence MSYDLETAERAAYAP. A helical membrane pass occupies residues 16 to 36; that stretch reads FFGYMGAASAQIFTVLGAAYG. The Cytoplasmic portion of the chain corresponds to 37 to 58; the sequence is TAKSAVGICSMGVMRPELIMKS. The chain crosses the membrane as a helical span at residues 59–79; the sequence is VIPVIMAGIIGIYGLVVAMVL. Over 80 to 98 the chain is Lumenal; sequence KGKVTSASAGYDLNKGFAH. A helical transmembrane segment spans residues 99-119; the sequence is LAAGLTCGLCGLGAGYAIGIV. The Cytoplasmic segment spans residues 120–137; the sequence is GDAGVRGTAQQPRLFVGM. A helical transmembrane segment spans residues 138-158; the sequence is ILILIFSEVLGLYGMIVALIL. The Lumenal portion of the chain corresponds to 159–161; that stretch reads GTS.

This sequence belongs to the V-ATPase proteolipid subunit family. V-ATPase is a heteromultimeric enzyme made up of two complexes: the ATP-hydrolytic V1 complex and the proton translocation V0 complex. The V1 complex consists of three catalytic AB heterodimers that form a heterohexamer, three peripheral stalks each consisting of EG heterodimers, one central rotor including subunits D and F, and the regulatory subunits C and H. The proton translocation complex V0 consists of the proton transport subunit a, a ring of proteolipid subunits c9c'', rotary subunit d, subunits e and f, and the accessory subunits vah-19/Ac45 and vah-20/PRR. In terms of tissue distribution, expressed in the H-shaped excretory cell, rectum, and a pair of cells posterior to the anus.

The protein localises to the membrane. Its function is as follows. Proton-conducting pore forming subunit of the V0 complex of vacuolar(H+)-ATPase (V-ATPase), a multisubunit enzyme composed of a peripheral complex (V1) that hydrolyzes ATP and a membrane integral complex (V0) that translocates protons. V-ATPase is responsible for acidifying and maintaining the pH of intracellular compartments and in some cell types, is targeted to the plasma membrane, where it is responsible for acidifying the extracellular environment. Involved in necrotic cell death. Required along with other vacuolar ATPase components for the removal of protein aggregates which form in immature oocytes in the distal gonad. This removal occurs as the oocytes mature and move to the proximal gonad, is triggered by the introduction of sperm through mating and occurs before fertilization. The introduction of sperm triggers V-ATPase accumulation in proximal oocytes and induces lysosomal acidification which leads to engulfing of protein aggregates by lysosomes and subsequent clearance of the aggregates. Lysosomal acidification also leads to changes in mitochondrial morphology and function. Mitochondria in distal immature oocytes are fragmented, produce high levels of reactive oxygen species (ROS) and have high membrane potential, indicative of metabolic inactivity. In contrast, mitochondria in proximal mature oocytes are tubular with lower ROS levels and membrane potential, indicative of an active metabolic state required for aggregate mobilization before clearance. The sequence is that of V-type proton ATPase 16 kDa proteolipid subunit c 2 from Caenorhabditis elegans.